Consider the following 237-residue polypeptide: Phosphoribosylaminoimidazole-succinocarboxamide synthase (237 aa).

The protein belongs to the SAICAR synthetase family.

The catalysed reaction is 5-amino-1-(5-phospho-D-ribosyl)imidazole-4-carboxylate + L-aspartate + ATP = (2S)-2-[5-amino-1-(5-phospho-beta-D-ribosyl)imidazole-4-carboxamido]succinate + ADP + phosphate + 2 H(+). It participates in purine metabolism; IMP biosynthesis via de novo pathway; 5-amino-1-(5-phospho-D-ribosyl)imidazole-4-carboxamide from 5-amino-1-(5-phospho-D-ribosyl)imidazole-4-carboxylate: step 1/2. This chain is Phosphoribosylaminoimidazole-succinocarboxamide synthase, found in Idiomarina loihiensis (strain ATCC BAA-735 / DSM 15497 / L2-TR).